Reading from the N-terminus, the 466-residue chain is F-box/WD repeat-containing protein 15 (466 aa).

In terms of domain architecture, F-box spans 1–45 (MAIHLPCLPMMKILSYLDAYSLLQAAQVNKDWNELASSDVLWRKL). 5 WD repeats span residues 101-143 (GYAC…ITWK), 146-185 (EQPA…ALAT), 187-228 (NLKS…LIST), 339-379 (LQCH…KTFQ), and 381-419 (CPEM…LRKC).

In terms of assembly, part of an SCF (SKP1-CUL1-F-box protein) E3 ubiquitin-protein ligase complex. Interacts with KAT7 and SKP1. Specifically expressed in oocytes from follicles of the medullary region of the ovary.

The protein resides in the cytoplasm. Its subcellular location is the cytosol. The protein localises to the endoplasmic reticulum. It is found in the nucleus. It functions in the pathway protein modification; protein ubiquitination. Functionally, substrate-recognition component of an SCF (SKP1-CUL1-F-box protein)-type E3 ubiquitin ligase complex. Promotes KAT7 ubiquitination and subsequent degradation in collaboration with MAP2K1 kinase, leading to reduced histone H3K14 acetylation and increased cell proliferation. This chain is F-box/WD repeat-containing protein 15, found in Mus musculus (Mouse).